Here is a 210-residue protein sequence, read N- to C-terminus: Protein GrpE (210 aa).

Positions 1-12 are enriched in basic and acidic residues; that stretch reads MSDQAKDERAPS. 2 disordered regions span residues 1-26 and 191-210; these read MSDQ…RTEG and IAAE…EKDA.

Belongs to the GrpE family. As to quaternary structure, homodimer.

It is found in the cytoplasm. Its function is as follows. Participates actively in the response to hyperosmotic and heat shock by preventing the aggregation of stress-denatured proteins, in association with DnaK and GrpE. It is the nucleotide exchange factor for DnaK and may function as a thermosensor. Unfolded proteins bind initially to DnaJ; upon interaction with the DnaJ-bound protein, DnaK hydrolyzes its bound ATP, resulting in the formation of a stable complex. GrpE releases ADP from DnaK; ATP binding to DnaK triggers the release of the substrate protein, thus completing the reaction cycle. Several rounds of ATP-dependent interactions between DnaJ, DnaK and GrpE are required for fully efficient folding. In Mesorhizobium japonicum (strain LMG 29417 / CECT 9101 / MAFF 303099) (Mesorhizobium loti (strain MAFF 303099)), this protein is Protein GrpE.